Here is a 773-residue protein sequence, read N- to C-terminus: 4'-phosphopantetheine phosphatase (773 aa).

N-acetylalanine is present on A2. Positions 2-402 are pantothenate kinase; that stretch reads AECGASGSGS…SPELGPAQRA (401 aa). The acetyl-CoA site is built by S196 and S199. At Y320 the chain carries 3'-nitrotyrosine. Phosphoserine is present on residues S393 and S404. Residues 403-773 are 4'-phosphopantetheine phosphatase; it reads RSGTFDLLEM…VIFKYEVPAE (371 aa). At T406 the chain carries Phosphothreonine. Residues D623, N624, and D659 each coordinate Mn(2+). The Subfamily II EGMGR motif motif lies at 724-728; it reads EGMGR.

This sequence in the N-terminal section; belongs to the type II pantothenate kinase family. In the C-terminal section; belongs to the damage-control phosphatase family. Phosphopantetheine phosphatase II subfamily. In terms of assembly, homodimer. Interacts with PKM. Mn(2+) is required as a cofactor. Ni(2+) serves as cofactor. As to expression, widely expressed with high expression in the muscle. Expressed in the retina and lens epithelium, mainly in ganglion cell layer, outer plexiform layer and retinal pigment layer (at protein level).

It is found in the cytoplasm. It carries out the reaction (R)-4'-phosphopantetheine + H2O = (R)-pantetheine + phosphate. It catalyses the reaction (R)-4'-phosphopantetheine sulfonate + H2O = (R)-pantetheine sulfonate + phosphate. The enzyme catalyses (R)-4'-phospho-S-sulfopantetheine + H2O = (R)-S-sulfopantetheine + phosphate. Activity is strongly promoted by Co(2+), Ni(2+), Mg(2+) and Mn(2+). Activity is inhibited by EDTA. Phosphatase which shows a preference for 4'-phosphopantetheine and its oxidatively damaged forms (sulfonate or S-sulfonate), providing strong indirect evidence that the phosphatase activity pre-empts damage in the coenzyme A (CoA) pathway. Hydrolyzing excess 4'-phosphopantetheine could constitute a directed overflow mechanism to prevent its oxidation to the S-sulfonate, sulfonate, or other forms. Hydrolyzing 4'-phosphopantetheine sulfonate or S-sulfonate would forestall their conversion to inactive forms of CoA and acyl carrier protein. May play a role in the physiological regulation of CoA intracellular levels. This is 4'-phosphopantetheine phosphatase from Homo sapiens (Human).